A 702-amino-acid chain; its full sequence is Methionine--tRNA ligase (702 aa).

The 'HIGH' region signature appears at P23–H33. Zn(2+) is bound by residues C154, C157, C167, and C170. Positions K341 to S345 match the 'KMSKS' region motif. K344 contributes to the ATP binding site. Residues L562 to P593 are disordered. Residues A569–N578 show a composition bias toward polar residues. The region spanning D599–R702 is the tRNA-binding domain.

Belongs to the class-I aminoacyl-tRNA synthetase family. MetG type 1 subfamily. As to quaternary structure, homodimer. Zn(2+) serves as cofactor.

Its subcellular location is the cytoplasm. The enzyme catalyses tRNA(Met) + L-methionine + ATP = L-methionyl-tRNA(Met) + AMP + diphosphate. In terms of biological role, is required not only for elongation of protein synthesis but also for the initiation of all mRNA translation through initiator tRNA(fMet) aminoacylation. In Xylella fastidiosa (strain 9a5c), this protein is Methionine--tRNA ligase.